Reading from the N-terminus, the 190-residue chain is GTP cyclohydrolase 1 (190 aa).

Residues Cys75, His78, and Cys146 each contribute to the Zn(2+) site.

This sequence belongs to the GTP cyclohydrolase I family. In terms of assembly, homomer.

The enzyme catalyses GTP + H2O = 7,8-dihydroneopterin 3'-triphosphate + formate + H(+). The protein operates within cofactor biosynthesis; 7,8-dihydroneopterin triphosphate biosynthesis; 7,8-dihydroneopterin triphosphate from GTP: step 1/1. This Campylobacter jejuni subsp. jejuni serotype O:6 (strain 81116 / NCTC 11828) protein is GTP cyclohydrolase 1.